The following is a 440-amino-acid chain: Proline--tRNA ligase (440 aa).

It belongs to the class-II aminoacyl-tRNA synthetase family. ProS type 2 subfamily. In terms of assembly, homodimer.

It localises to the cytoplasm. The enzyme catalyses tRNA(Pro) + L-proline + ATP = L-prolyl-tRNA(Pro) + AMP + diphosphate. Functionally, catalyzes the attachment of proline to tRNA(Pro) in a two-step reaction: proline is first activated by ATP to form Pro-AMP and then transferred to the acceptor end of tRNA(Pro). This chain is Proline--tRNA ligase, found in Rhizobium etli (strain ATCC 51251 / DSM 11541 / JCM 21823 / NBRC 15573 / CFN 42).